The primary structure comprises 199 residues: MGSQSSKAPRGDVTAEEAAGASPAKANGQENGHVKSNGDLTPKGEGESPPVNGTDEAAGATGDAIEPAPPSQGAEAKGDAPPKETPKKKKKFSFKKPFKLSGLSFKRNRKEGGGDSSASSPTEEEQEQGEIGACSEEGTAPEGKAAATPESQEPQAKGAEAGAACKGGDTEEEAGPPAEPSTPSGPESGPTPAGAEQNE.

Residues 1–199 (MGSQSSKAPR…PTPAGAEQNE (199 aa)) are disordered. Glycine 2 carries the N-myristoyl glycine lipid modification. Threonine 14 is subject to Phosphothreonine. Positions 16–26 (EEAAGASPAKA) are enriched in low complexity. Phosphoserine occurs at positions 22, 36, and 48. A compositionally biased stretch (low complexity) spans 53–64 (GTDEAAGATGDA). Serine 71 bears the Phosphoserine mark. The span at 76–85 (AKGDAPPKET) shows a compositional bias: basic and acidic residues. Threonine 85 bears the Phosphothreonine mark. The span at 86–98 (PKKKKKFSFKKPF) shows a compositional bias: basic residues. The segment at 87–110 (KKKKKFSFKKPFKLSGLSFKRNRK) is effector domain involved in lipid-binding and calmodulin-binding. Phosphoserine; by PKC occurs at positions 93, 101, and 104. Position 119 is a phosphoserine (serine 119). Serine 120 carries the post-translational modification Phosphoserine; by MAPK8. Serine 135 carries the post-translational modification Phosphoserine. Residue threonine 148 is modified to Phosphothreonine; by MAPK8. The residue at position 151 (serine 151) is a Phosphoserine. The span at 156–167 (AKGAEAGAACKG) shows a compositional bias: low complexity. Threonine 170 bears the Phosphothreonine mark. Low complexity predominate over residues 181–199 (STPSGPESGPTPAGAEQNE). Threonine 182 carries the post-translational modification Phosphothreonine; by MAPK8. A Phosphothreonine modification is found at threonine 191.

Belongs to the MARCKS family. Binds to filamentous actin (F-actin), but not to monomeric G-actin, independently of its phosphorylation status. Interacts with calmodulin. Phosphorylated. Phosphorylation at Ser-120 and Thr-182 is non-redundantly catalyzed by MAPK8 in vivo. Phosphorylation at Thr-148 is preferentially catalyzed by MAPK8 in vivo, but this modification can also be catalyzed by other kinases in the absence of MAPK8. May be phosphorylated by protein kinase C, which disrupts the interaction with calmodulin.

The protein localises to the cytoplasm. Its subcellular location is the cytoskeleton. It is found in the cell membrane. Controls cell movement by regulating actin cytoskeleton homeostasis and filopodium and lamellipodium formation. When unphosphorylated, induces cell migration. When phosphorylated by MAPK8, induces actin bundles formation and stabilization, thereby reducing actin plasticity, hence restricting cell movement, including neuronal migration. May be involved in coupling the protein kinase C and calmodulin signal transduction systems. This Oryctolagus cuniculus (Rabbit) protein is MARCKS-related protein (MARCKSL1).